A 340-amino-acid chain; its full sequence is Immunoglobulin-binding protein 1 family member C (340 aa).

Disordered stretches follow at residues 223-243 (KDSSREASTSNSCHQKRPPMK) and 292-340 (PEEF…QNMG). Positions 303 to 314 (EDQEKEEEDDEQ) are enriched in acidic residues. Basic and acidic residues predominate over residues 318 to 330 (RAREWDDWKDTHP).

This sequence belongs to the IGBP1/TAP42 family.

This Homo sapiens (Human) protein is Immunoglobulin-binding protein 1 family member C.